A 207-amino-acid chain; its full sequence is Ribosomal RNA small subunit methyltransferase G (207 aa).

S-adenosyl-L-methionine is bound by residues G74, L79, 125 to 126 (VE), and R140.

This sequence belongs to the methyltransferase superfamily. RNA methyltransferase RsmG family.

The protein resides in the cytoplasm. It catalyses the reaction guanosine(527) in 16S rRNA + S-adenosyl-L-methionine = N(7)-methylguanosine(527) in 16S rRNA + S-adenosyl-L-homocysteine. Its function is as follows. Specifically methylates the N7 position of guanine in position 527 of 16S rRNA. This Shewanella loihica (strain ATCC BAA-1088 / PV-4) protein is Ribosomal RNA small subunit methyltransferase G.